Here is a 385-residue protein sequence, read N- to C-terminus: Na(+)/H(+) antiporter NhaA (385 aa).

The next 11 helical transmembrane spans lie at 9–29 (YSAI…NVLD), 45–65 (IFGL…VFFF), 87–107 (IIPG…YLSV), 114–134 (GWPV…AIFG), 155–175 (AGIV…WIIV), 198–218 (TFLI…SVYQ), 220–235 (GIHA…IMLN), 245–265 (ALEP…AAMV), 282–302 (ILLG…IIAL), 312–332 (FFNL…SLLM), and 345–365 (QGVI…IILM).

The protein belongs to the NhaA Na(+)/H(+) (TC 2.A.33) antiporter family.

The protein localises to the cell membrane. The enzyme catalyses Na(+)(in) + 2 H(+)(out) = Na(+)(out) + 2 H(+)(in). Na(+)/H(+) antiporter that extrudes sodium in exchange for external protons. In Tropheryma whipplei (strain Twist) (Whipple's bacillus), this protein is Na(+)/H(+) antiporter NhaA.